Here is a 387-residue protein sequence, read N- to C-terminus: 1-deoxy-D-xylulose 5-phosphate reductoisomerase (387 aa).

NADPH is bound by residues Thr-10, Gly-11, Ser-12, Ile-13, and Asn-124. 1-deoxy-D-xylulose 5-phosphate is bound at residue Lys-125. An NADPH-binding site is contributed by Glu-126. Asp-150 contributes to the Mn(2+) binding site. Residues Ser-151, Glu-152, Ser-176, and His-199 each coordinate 1-deoxy-D-xylulose 5-phosphate. Residue Glu-152 participates in Mn(2+) binding. An NADPH-binding site is contributed by Gly-205. Ser-212, Asn-217, Lys-218, and Glu-221 together coordinate 1-deoxy-D-xylulose 5-phosphate. Residue Glu-221 coordinates Mn(2+).

The protein belongs to the DXR family. Mg(2+) is required as a cofactor. Mn(2+) serves as cofactor.

The enzyme catalyses 2-C-methyl-D-erythritol 4-phosphate + NADP(+) = 1-deoxy-D-xylulose 5-phosphate + NADPH + H(+). Its pathway is isoprenoid biosynthesis; isopentenyl diphosphate biosynthesis via DXP pathway; isopentenyl diphosphate from 1-deoxy-D-xylulose 5-phosphate: step 1/6. Catalyzes the NADPH-dependent rearrangement and reduction of 1-deoxy-D-xylulose-5-phosphate (DXP) to 2-C-methyl-D-erythritol 4-phosphate (MEP). This Clostridium beijerinckii (strain ATCC 51743 / NCIMB 8052) (Clostridium acetobutylicum) protein is 1-deoxy-D-xylulose 5-phosphate reductoisomerase.